The sequence spans 874 residues: MKTTAEIRQAFLDFFHSKGHQIVDSSSLVPENDPTLLFTNAGMNQFKDVFLGLDTRSYTRATTAQRCVRAGGKHNDLENVGYTARHHTFFEMLGNFSFGDYFKQDAIKFAWEFLTSPEWLGLPEEKLYVTVYETDDEAYGIWHKGVGVPENHIIRIGDNKGAPYASDNFWAMGDTGPCGPCTEIFYDHGEHVWGGLPGSEEEDGDRYIEVWNIVFMQFNRLADGTMEKLPKPSVDTGMGLERISAVIQHVNSNYDIDIFQKLIAKVAELTGEKDLTNKSLRVIADHIRSCAYLIADGVIPSNEGRGYVLRRIIRRAVRHGHLLGAKDTFFYKLVPVLIDVMATAGKDVKAKQANVEKLLRLEEEQFARTLERGLALLDEALINVKDGVLSGEVAFKLYDTYGFPLDLTADVCRERNIRIDEEGFEREMEVQRLRAQAASRFGVDYNNVIRVEGTTTFEGYTEAETQAKVTALFYEGKSVESISAGQSAVVILDDTPFYAESGGQIGDRGCLIATNMRFDVKDTQKYGQVFGHIGTLIQGTLNVGQTINAVVDTEHRTKTSLNHSATHLLHAALRQVLGTHVAQKGSLVSDTILRFDFAQPEAIRQEQLFEIECLVNQHIRANHLVVTEVMPIDEAKAKGAMALFGEKYGDVVRVVKMGEFSIELCGGIHVKRTGEIGLFKIVSESAIAAGVRRVEAVTGEAAINWLQQQQQILMQSADLLKSDANSLVEKIQQLQDKAKKTEKELQALKEKSAMKAGSDIAKSAVEINGVSVIVQQLENMDVKSLRVIVDDLKNQLGSAVIAFVTKTEDKVNLVVGVTTDLTSKVKAGELVNLMAQQVGGKGGGRPDMAMAGGSQPENISKALTVCNEWLHKNL.

The Zn(2+) site is built by His563, His567, Cys665, and His669.

Belongs to the class-II aminoacyl-tRNA synthetase family. It depends on Zn(2+) as a cofactor.

The protein localises to the cytoplasm. The enzyme catalyses tRNA(Ala) + L-alanine + ATP = L-alanyl-tRNA(Ala) + AMP + diphosphate. Its function is as follows. Catalyzes the attachment of alanine to tRNA(Ala) in a two-step reaction: alanine is first activated by ATP to form Ala-AMP and then transferred to the acceptor end of tRNA(Ala). Also edits incorrectly charged Ser-tRNA(Ala) and Gly-tRNA(Ala) via its editing domain. In Histophilus somni (strain 129Pt) (Haemophilus somnus), this protein is Alanine--tRNA ligase.